The sequence spans 142 residues: Endoribonuclease YbeY (142 aa).

Residues His107, His111, and Asp117 each coordinate Zn(2+).

The protein belongs to the endoribonuclease YbeY family. Zn(2+) is required as a cofactor.

It localises to the cytoplasm. Single strand-specific metallo-endoribonuclease involved in late-stage 70S ribosome quality control and in maturation of the 3' terminus of the 16S rRNA. This is Endoribonuclease YbeY from Chlorobium phaeobacteroides (strain DSM 266 / SMG 266 / 2430).